The primary structure comprises 372 residues: MTVAQPLVLLAAGGTGGHLFPAEALALRLRDRGIRVVLASDGRVEALSGGFPASEIVSIPSATPSGRSPLARGAAFLTLGRGFAAAIRAVRRLNPAVVVGFGGYPTVPPLLAAQMLRVPTLLHEQNAVMGRANGFLARGASVIATGFSEVRGVPARAGARRVHTGNPVRPAVLAAADTPYPALSPDGPLNLLAFGGSQGARVMSEVVPEAVARLPAPLRARLHVVQQARAEDLARAEAIYGRAGLASASVAPFFKDLPARMAAAHLVVARSGASTVAELAVIGRPAILVPLPGSLDQDQAANAAVLGAAGAAFPRPQTDFIPERLAADLEALFGAPERLAAAAAAARRTGIPDAAERLAALVVETAIAASTR.

UDP-N-acetyl-alpha-D-glucosamine contacts are provided by residues 15 to 17 (TGG), asparagine 126, arginine 169, serine 197, and glutamine 299.

It belongs to the glycosyltransferase 28 family. MurG subfamily.

It localises to the cell inner membrane. It carries out the reaction di-trans,octa-cis-undecaprenyl diphospho-N-acetyl-alpha-D-muramoyl-L-alanyl-D-glutamyl-meso-2,6-diaminopimeloyl-D-alanyl-D-alanine + UDP-N-acetyl-alpha-D-glucosamine = di-trans,octa-cis-undecaprenyl diphospho-[N-acetyl-alpha-D-glucosaminyl-(1-&gt;4)]-N-acetyl-alpha-D-muramoyl-L-alanyl-D-glutamyl-meso-2,6-diaminopimeloyl-D-alanyl-D-alanine + UDP + H(+). Its pathway is cell wall biogenesis; peptidoglycan biosynthesis. Its function is as follows. Cell wall formation. Catalyzes the transfer of a GlcNAc subunit on undecaprenyl-pyrophosphoryl-MurNAc-pentapeptide (lipid intermediate I) to form undecaprenyl-pyrophosphoryl-MurNAc-(pentapeptide)GlcNAc (lipid intermediate II). In Methylobacterium sp. (strain 4-46), this protein is UDP-N-acetylglucosamine--N-acetylmuramyl-(pentapeptide) pyrophosphoryl-undecaprenol N-acetylglucosamine transferase.